Reading from the N-terminus, the 531-residue chain is Developmental and secondary metabolism regulator VE1 (531 aa).

The Velvet domain occupies N26–R220. A Nuclear localization signal motif is present at residues E40–C45. Disordered stretches follow at residues L206–S435 and P447–D517. Over residues F244 to R253 the composition is skewed to basic and acidic residues. The segment covering Y295–E306 has biased composition (pro residues). The span at Y348–S357 shows a compositional bias: polar residues. Basic and acidic residues predominate over residues L381 to Q390. A compositionally biased stretch (low complexity) spans S391 to T405. Pro residues predominate over residues S416–P427. Residues M430 to A461 form a PEST region. The span at F479–R491 shows a compositional bias: polar residues.

The protein belongs to the velvet family. VeA subfamily. Component of the heterotrimeric velvet complex composed of LAE1, VE1 and VELB; VE1 acting as a bridging protein between LAE1 and VELB. Interacts with VELB and VELC.

Its subcellular location is the nucleus. It is found in the cytoplasm. Component of the velvet transcription factor complex that controls sexual/asexual developmental ratio in response to light, promoting sexual development in the darkness while stimulating asexual sporulation under illumination. The velvet complex hat acts as a global regulator for secondary metabolite gene expression. Controls the expression of the cycotoxins fumonisins and fusarins gene cluster. Involved in cell wall integrity, cell surface hydrophobicity, hyphal polarity and conidiation pattern. Required for pathogenicity against maize seedlings. Involved in oxidative stress resistance by positively regulating the transcription of the catalase-encoding gene CAT2. This is Developmental and secondary metabolism regulator VE1 from Gibberella moniliformis (strain M3125 / FGSC 7600) (Maize ear and stalk rot fungus).